Here is a 690-residue protein sequence, read N- to C-terminus: Glycine--tRNA ligase beta subunit (690 aa).

It belongs to the class-II aminoacyl-tRNA synthetase family. As to quaternary structure, tetramer of two alpha and two beta subunits.

It is found in the cytoplasm. The catalysed reaction is tRNA(Gly) + glycine + ATP = glycyl-tRNA(Gly) + AMP + diphosphate. In Proteus mirabilis (strain HI4320), this protein is Glycine--tRNA ligase beta subunit.